A 616-amino-acid polypeptide reads, in one-letter code: Probable Xaa-Pro aminopeptidase P (616 aa).

Residues Asp413, Asp424, Glu522, and Glu536 each coordinate Mn(2+).

Belongs to the peptidase M24B family. It depends on Mn(2+) as a cofactor.

The enzyme catalyses Release of any N-terminal amino acid, including proline, that is linked to proline, even from a dipeptide or tripeptide.. In terms of biological role, catalyzes the removal of a penultimate prolyl residue from the N-termini of peptides. This Paracoccidioides brasiliensis (strain Pb03) protein is Probable Xaa-Pro aminopeptidase P (AMPP).